The primary structure comprises 540 residues: Phosphatidylinositol 4-phosphate 5-kinase type-1 beta (540 aa).

The disordered stretch occupies residues 1–23; sequence MSSVTENGDVTAGKPNEEKTYKK. In terms of domain architecture, PIPK spans 25-395; that stretch reads TSSAIKGAIQ…RFLKFMNTRV (371 aa).

The protein localises to the cytoplasm. Its subcellular location is the cytosol. It is found in the cell membrane. It localises to the endomembrane system. It carries out the reaction a 1,2-diacyl-sn-glycero-3-phospho-(1D-myo-inositol 4-phosphate) + ATP = a 1,2-diacyl-sn-glycero-3-phospho-(1D-myo-inositol-4,5-bisphosphate) + ADP + H(+). It catalyses the reaction 1-octadecanoyl-2-(5Z,8Z,11Z,14Z)-eicosatetraenoyl-sn-glycero-3-phospho-1D-myo-inositol 4-phosphate + ATP = 1-octadecanoyl-2-(5Z,8Z,11Z,14Z)-eicosatetraenoyl-sn-glycero-3-phospho-1D-myo-inositol 4,5-bisphosphate + ADP + H(+). The enzyme catalyses 1-octadecanoyl-2-(9Z)-octadecenoyl-sn-glycero-3-phospho-1D-myo-inositol 4-phosphate + ATP = 1-octadecanoyl-2-(9Z)-octadecenoyl-sn-glycero-3-phospho-1D-myo-inositol 4,5-bisphosphate + ADP + H(+). The catalysed reaction is 1-octadecanoyl-2-(9Z)-octadecenoyl-sn-glycero-3-phospho-1D-myo-inositol + ATP = 1-octadecanoyl-2-(9Z)-octadecenoyl-sn-glycero-3-phospho-1D-myo-inositol 5-phosphate + ADP + H(+). It carries out the reaction 1-octadecanoyl-2-(9Z,12Z)-octadecadienoyl-sn-glycero-3-phospho-1D-myo-inositol + ATP = 1-octadecanoyl-2-(9Z,12Z)-octadecadienoyl-sn-glycero-3-phospho-1D-myo-inositol 5-phosphate + ADP + H(+). It catalyses the reaction 1-octadecanoyl-2-(5Z,8Z,11Z,14Z-eicosatetraenoyl)-sn-glycero-3-phospho-(1D-myo-inositol) + ATP = 1-octadecanoyl-2-(5Z,8Z,11Z,14Z)-eicosatetraenoyl-sn-glycero-3-phospho-1D-myo-inositol 5-phosphate + ADP + H(+). The enzyme catalyses 1,2-di-(9Z,12Z)-octadecadienoyl-sn-glycero-3-phospho-1D-myo-inositol + ATP = 1,2-di(9Z,12Z)-octadecadienoyl-sn-glycero-3-phospho-1D-myo-inositol 5-phosphate + ADP + H(+). Its function is as follows. Catalyzes the phosphorylation of phosphatidylinositol 4-phosphate (PtdIns(4)P/PI4P) to form phosphatidylinositol 4,5-bisphosphate (PtdIns(4,5)P2/PIP2), a lipid second messenger that regulates several cellular processes such as signal transduction, vesicle trafficking, actin cytoskeleton dynamics, cell adhesion, and cell motility. PtdIns(4,5)P2 can directly act as a second messenger or can be utilized as a precursor to generate other second messengers: inositol 1,4,5-trisphosphate (IP3), diacylglycerol (DAG) or phosphatidylinositol-3,4,5-trisphosphate (PtdIns(3,4,5)P3/PIP3). The polypeptide is Phosphatidylinositol 4-phosphate 5-kinase type-1 beta (PIP5K1B) (Gallus gallus (Chicken)).